A 527-amino-acid polypeptide reads, in one-letter code: Amidophosphoribosyltransferase (527 aa).

Residues 1–30 (MAVDSDYVTDRAAGSRQTVTGQQPEQDLNS) form a disordered region. Residues 1–34 (MAVDSDYVTDRAAGSRQTVTGQQPEQDLNSPREE) constitute a propeptide that is removed on maturation. A compositionally biased stretch (polar residues) spans 15–29 (SRQTVTGQQPEQDLN). The Nucleophile role is filled by Cys35. Positions 35–261 (CGVFGVWAPG…PGELLAIDAD (227 aa)) constitute a Glutamine amidotransferase type-2 domain. [4Fe-4S] cluster is bound at residue Cys276. 3 residues coordinate Mg(2+): Ser323, Asp385, and Asp386. Residues Cys422, Cys478, and Cys481 each coordinate [4Fe-4S] cluster.

It in the C-terminal section; belongs to the purine/pyrimidine phosphoribosyltransferase family. It depends on Mg(2+) as a cofactor. [4Fe-4S] cluster is required as a cofactor.

It catalyses the reaction 5-phospho-beta-D-ribosylamine + L-glutamate + diphosphate = 5-phospho-alpha-D-ribose 1-diphosphate + L-glutamine + H2O. Its pathway is purine metabolism; IMP biosynthesis via de novo pathway; N(1)-(5-phospho-D-ribosyl)glycinamide from 5-phospho-alpha-D-ribose 1-diphosphate: step 1/2. Functionally, catalyzes the formation of phosphoribosylamine from phosphoribosylpyrophosphate (PRPP) and glutamine. This is Amidophosphoribosyltransferase from Mycobacterium bovis (strain ATCC BAA-935 / AF2122/97).